The following is a 207-amino-acid chain: ATP synthase subunit b 2 (207 aa).

A helical transmembrane segment spans residues 53-72 (TYASQLLWLVITFSVFYLLM).

This sequence belongs to the ATPase B chain family. In terms of assembly, F-type ATPases have 2 components, F(1) - the catalytic core - and F(0) - the membrane proton channel. F(1) has five subunits: alpha(3), beta(3), gamma(1), delta(1), epsilon(1). F(0) has three main subunits: a(1), b(2) and c(10-14). The alpha and beta chains form an alternating ring which encloses part of the gamma chain. F(1) is attached to F(0) by a central stalk formed by the gamma and epsilon chains, while a peripheral stalk is formed by the delta and b chains.

It localises to the cell inner membrane. Functionally, f(1)F(0) ATP synthase produces ATP from ADP in the presence of a proton or sodium gradient. F-type ATPases consist of two structural domains, F(1) containing the extramembraneous catalytic core and F(0) containing the membrane proton channel, linked together by a central stalk and a peripheral stalk. During catalysis, ATP synthesis in the catalytic domain of F(1) is coupled via a rotary mechanism of the central stalk subunits to proton translocation. Its function is as follows. Component of the F(0) channel, it forms part of the peripheral stalk, linking F(1) to F(0). The b'-subunit is a diverged and duplicated form of b found in plants and photosynthetic bacteria. The chain is ATP synthase subunit b 2 (atpF2) from Rhizobium etli (strain CIAT 652).